The following is a 764-amino-acid chain: ATP-dependent DNA helicase DDM1 (764 aa).

Positions 1–42 (MVSLRSRKVIPASEMVSDGKTEKDASGDSPTSVLNEEENCEE) are disordered. Over residues 17–26 (SDGKTEKDAS) the composition is skewed to basic and acidic residues. Residues 62–88 (LISEAMAQEEEQLLKLREDEEKANNAG) are a coiled coil. The interval 129-152 (IESESQKAEPEKTGRGRKRKAASQ) is disordered. Over residues 132 to 142 (ESQKAEPEKTG) the composition is skewed to basic and acidic residues. Positions 145–152 (RKRKAASQ) match the Nuclear localization signal 1 motif. Positions 214-382 (ISLWQNGLNG…WSLLNFILPD (169 aa)) constitute a Helicase ATP-binding domain. An ATP-binding site is contributed by 227-234 (DQMGLGKT). The DEAH box signature appears at 333–336 (DEGH). The Nuclear localization signal 2 motif lies at 429–436 (LRRMKCDV). One can recognise a Helicase C-terminal domain in the interval 528–695 (LLERLLVRLF…STPLEEEDIL (168 aa)).

Belongs to the SNF2/RAD54 helicase family. As to quaternary structure, interacts with the MBD domains of MBD2, MBD5 and MBD6.

The protein resides in the nucleus. The enzyme catalyses ATP + H2O = ADP + phosphate + H(+). Its activity is regulated as follows. ATPase activity is stimulated 3-fold by DNA (both free and nucleosomal) binding. In terms of biological role, ATP-dependent DNA helicase that plays a role in formation, organization, stability and heritability of heterochromatin and thus regulates several physiological traits. Binds to the nucleosome and promotes chromatin remodeling in an ATP-dependent manner; induces nucleosome repositioning on a short DNA fragment, and, possibly, could be guided to target sites (including silent transposable elements) by small interfering RNAs (siRNAs). Can bind both free and nucleosomal DNA. Required for the heritable maintenance of genome integrity and transcriptional gene silencing (TGS), including homology-dependent gene silencing (HDG silencing), via the maintenance of DNA methylation (mostly on cytosine, in both CpG and CpHpG sites, where H is A, T or C) and of histone methylation (e.g. chromatin methylation). May facilitate localization of MBD proteins at specific nuclear domains. Necessary for the maintenance of the genomic imprint at the MEA locus, especially for the silencing of paternally inherited MEA locus. Plays a major role in the inactivation maintenance of retrotransposons (e.g. Tar17, SINE, LINE, ATLN39, CAC1 (CACTAs), Athila elements, and mutator-like elements MULEs and TIR-MULEs) and the silencing of repeated genes and transgenes (e.g. T-DNA insertions). Required for KYP-dependent histone H3 'Lys-9' (H3K9me) methylation, deacetylation of histone H4 'Lys-16' (H4K16) and MET1-dependent DNA methylation. Involved in the chromatin organization of 5S rRNA genes (localized in the pericentromeric heterochromatin of chromosomes 3, 4, and 5) modifications during heterochromatin establishment. Prevents siRNA accumulation (siRNA are probably involved in epigenetic inheritance and in 5S rRNA genes regulation by silencing). Required during plant organogenesis and development, as well as during seed formation. The sequence is that of ATP-dependent DNA helicase DDM1 (DDM1) from Arabidopsis thaliana (Mouse-ear cress).